A 701-amino-acid polypeptide reads, in one-letter code: DNA ligase (701 aa).

NAD(+) is bound by residues 50–54 (DYEYD), 99–100 (SL), and glutamate 130. The active-site N6-AMP-lysine intermediate is the lysine 132. NAD(+)-binding residues include arginine 153, glutamate 187, lysine 301, and lysine 325. Residues cysteine 419, cysteine 422, cysteine 437, and cysteine 442 each coordinate Zn(2+). The 76-residue stretch at 626 to 701 (NEHQKYMNKT…EIITEPFWDN (76 aa)) folds into the BRCT domain.

This sequence belongs to the NAD-dependent DNA ligase family. LigA subfamily. Mg(2+) is required as a cofactor. Mn(2+) serves as cofactor.

The enzyme catalyses NAD(+) + (deoxyribonucleotide)n-3'-hydroxyl + 5'-phospho-(deoxyribonucleotide)m = (deoxyribonucleotide)n+m + AMP + beta-nicotinamide D-nucleotide.. In terms of biological role, DNA ligase that catalyzes the formation of phosphodiester linkages between 5'-phosphoryl and 3'-hydroxyl groups in double-stranded DNA using NAD as a coenzyme and as the energy source for the reaction. It is essential for DNA replication and repair of damaged DNA. The sequence is that of DNA ligase from Malacoplasma penetrans (strain HF-2) (Mycoplasma penetrans).